The following is a 459-amino-acid chain: Cysteine--tRNA ligase (459 aa).

C28 provides a ligand contact to Zn(2+). The 'HIGH' region motif lies at 30–40 (VTIYDLCHIGH). The Zn(2+) site is built by C209, H234, and E238. Positions 266–270 (KMSKS) match the 'KMSKS' region motif. K269 is an ATP binding site.

Belongs to the class-I aminoacyl-tRNA synthetase family. Monomer. Zn(2+) serves as cofactor.

Its subcellular location is the cytoplasm. It carries out the reaction tRNA(Cys) + L-cysteine + ATP = L-cysteinyl-tRNA(Cys) + AMP + diphosphate. In Shewanella baltica (strain OS223), this protein is Cysteine--tRNA ligase.